Reading from the N-terminus, the 362-residue chain is Aminomethyltransferase (362 aa).

The protein belongs to the GcvT family. As to quaternary structure, the glycine cleavage system is composed of four proteins: P, T, L and H.

The catalysed reaction is N(6)-[(R)-S(8)-aminomethyldihydrolipoyl]-L-lysyl-[protein] + (6S)-5,6,7,8-tetrahydrofolate = N(6)-[(R)-dihydrolipoyl]-L-lysyl-[protein] + (6R)-5,10-methylene-5,6,7,8-tetrahydrofolate + NH4(+). Functionally, the glycine cleavage system catalyzes the degradation of glycine. The protein is Aminomethyltransferase of Listeria monocytogenes serotype 4b (strain F2365).